The primary structure comprises 172 residues: Large ribosomal subunit protein uL10 (172 aa).

It belongs to the universal ribosomal protein uL10 family. In terms of assembly, part of the ribosomal stalk of the 50S ribosomal subunit. The N-terminus interacts with L11 and the large rRNA to form the base of the stalk. The C-terminus forms an elongated spine to which L12 dimers bind in a sequential fashion forming a multimeric L10(L12)X complex.

Functionally, forms part of the ribosomal stalk, playing a central role in the interaction of the ribosome with GTP-bound translation factors. This chain is Large ribosomal subunit protein uL10 (rplJ), found in Liberibacter africanus (Citrus greening disease).